We begin with the raw amino-acid sequence, 185 residues long: Translation initiation factor IF-3 (185 aa).

It belongs to the IF-3 family. Monomer.

Its subcellular location is the cytoplasm. In terms of biological role, IF-3 binds to the 30S ribosomal subunit and shifts the equilibrium between 70S ribosomes and their 50S and 30S subunits in favor of the free subunits, thus enhancing the availability of 30S subunits on which protein synthesis initiation begins. This chain is Translation initiation factor IF-3, found in Bacteroides thetaiotaomicron (strain ATCC 29148 / DSM 2079 / JCM 5827 / CCUG 10774 / NCTC 10582 / VPI-5482 / E50).